We begin with the raw amino-acid sequence, 354 residues long: 4-hydroxy-2-oxovalerate aldolase 6 (354 aa).

Residues 10–262 form the Pyruvate carboxyltransferase domain; it reads VRIVDTTLRD…ATGLDVMATL (253 aa). 18–19 is a substrate binding site; the sequence is RD. Asp19 provides a ligand contact to Mn(2+). His22 acts as the Proton acceptor in catalysis. Residues Ser172 and His201 each coordinate substrate. Residues His201 and His203 each contribute to the Mn(2+) site. Tyr292 lines the substrate pocket.

This sequence belongs to the 4-hydroxy-2-oxovalerate aldolase family.

The catalysed reaction is (S)-4-hydroxy-2-oxopentanoate = acetaldehyde + pyruvate. The polypeptide is 4-hydroxy-2-oxovalerate aldolase 6 (Rhodococcus jostii (strain RHA1)).